The sequence spans 121 residues: Large ribosomal subunit protein uL18 (121 aa).

The protein belongs to the universal ribosomal protein uL18 family. As to quaternary structure, part of the 50S ribosomal subunit; part of the 5S rRNA/L5/L18/L25 subcomplex. Contacts the 5S and 23S rRNAs.

Its function is as follows. This is one of the proteins that bind and probably mediate the attachment of the 5S RNA into the large ribosomal subunit, where it forms part of the central protuberance. The chain is Large ribosomal subunit protein uL18 from Bdellovibrio bacteriovorus (strain ATCC 15356 / DSM 50701 / NCIMB 9529 / HD100).